Reading from the N-terminus, the 66-residue chain is Large ribosomal subunit protein bL33c (66 aa).

Belongs to the bacterial ribosomal protein bL33 family.

Its subcellular location is the plastid. It is found in the chloroplast. This Aethionema grandiflorum (Persian stone-cress) protein is Large ribosomal subunit protein bL33c.